A 93-amino-acid chain; its full sequence is MYKQQYFISGKVQGVGFRFFTEQIANNMKLKGFVKNLNDGRVEIVAFFNTNEQMKKFEKLLKNGNKYSNIENIEKKTLDENYPFQFNNFKIYY.

The Acylphosphatase-like domain occupies 3–93; sequence KQQYFISGKV…FQFNNFKIYY (91 aa). Residues Arg-18 and Asn-36 contribute to the active site.

This sequence belongs to the acylphosphatase family.

It catalyses the reaction an acyl phosphate + H2O = a carboxylate + phosphate + H(+). This is Acylphosphatase (acyP) from Borrelia garinii subsp. bavariensis (strain ATCC BAA-2496 / DSM 23469 / PBi) (Borreliella bavariensis).